The chain runs to 170 residues: Adenine phosphoribosyltransferase (170 aa).

Belongs to the purine/pyrimidine phosphoribosyltransferase family. Homodimer.

It is found in the cytoplasm. It catalyses the reaction AMP + diphosphate = 5-phospho-alpha-D-ribose 1-diphosphate + adenine. It functions in the pathway purine metabolism; AMP biosynthesis via salvage pathway; AMP from adenine: step 1/1. Its function is as follows. Catalyzes a salvage reaction resulting in the formation of AMP, that is energically less costly than de novo synthesis. The polypeptide is Adenine phosphoribosyltransferase (Lactococcus lactis subsp. lactis (strain IL1403) (Streptococcus lactis)).